The primary structure comprises 458 residues: MRNNFVPIILSFIIFLTPSIAEQEPSILSPVDQLLNKTSSYLDFSTKFNQPRIELTTSTIIAGLLSFLASSISSAGGIGGGGLYVPIMTIVAGLDLKTASSFSAFMVTGGSIANVGCNLFVRNPKSGGKTLIDFDLALLLEPCMLLGVSIGVICNLVFPNWLITSLFAVFLAWSTLKTFGNGLYYWRLESEMVKIRESNRIEEDDEEDKIESLKLPLLEDYQRPKRFPWIKLGVLVIIWLSYFAVYLLRGNKYGEGIISIEPCGNAYWLISSSQIPLTLFFTLWICFSDNVQSQQQSDYHVSVKDVEDLRSNDGARSNKCMFPVMALLAGVLGGVFGIGGGMLISPLLLQVGIAPEVTAATCSFMVLFSSTMSAIQYLLLGMEHTGTASIFAVICFVASLVGLKVVQKVITEYGRASIIVFSVGIVMALSIVLMTSYGALDVWNDYVSGRYMGFKLPC.

A run of 12 helical transmembrane segments spans residues 5–25 (FVPIILSFIIFLTPSIAEQEP), 53–73 (IELTTSTIIAGLLSFLASSIS), 74–94 (SAGGIGGGGLYVPIMTIVAGL), 101–121 (SFSAFMVTGGSIANVGCNLFV), 128–148 (GKTLIDFDLALLLEPCMLLGV), 150–170 (IGVICNLVFPNWLITSLFAVF), 227–247 (FPWIKLGVLVIIWLSYFAVYL), 267–287 (YWLISSSQIPLTLFFTLWICF), 324–344 (VMALLAGVLGGVFGIGGGMLI), 348–368 (LLQVGIAPEVTAATCSFMVLF), 386–406 (GTASIFAVICFVASLVGLKVV), and 418–438 (IIVFSVGIVMALSIVLMTSYG).

This sequence belongs to the 4-toluene sulfonate uptake permease (TSUP) (TC 2.A.102) family.

It localises to the membrane. In Arabidopsis thaliana (Mouse-ear cress), this protein is Sulfite exporter TauE/SafE family protein 2.